We begin with the raw amino-acid sequence, 122 residues long: Small ribosomal subunit protein uS13 (122 aa).

Positions 95–122 are disordered; the sequence is SLPCRGQRTSTNARTRKGPKRAAVKKKK. Positions 108 to 122 are enriched in basic residues; it reads RTRKGPKRAAVKKKK.

It belongs to the universal ribosomal protein uS13 family. As to quaternary structure, part of the 30S ribosomal subunit. Forms a loose heterodimer with protein S19. Forms two bridges to the 50S subunit in the 70S ribosome.

Located at the top of the head of the 30S subunit, it contacts several helices of the 16S rRNA. In the 70S ribosome it contacts the 23S rRNA (bridge B1a) and protein L5 of the 50S subunit (bridge B1b), connecting the 2 subunits; these bridges are implicated in subunit movement. Contacts the tRNAs in the A and P-sites. This Desulforapulum autotrophicum (strain ATCC 43914 / DSM 3382 / VKM B-1955 / HRM2) (Desulfobacterium autotrophicum) protein is Small ribosomal subunit protein uS13.